The primary structure comprises 63 residues: AZLGFZGFVMSDWAAHHAGVSGALAGLBMGSMPGBVBYBSGTSYWGTNLTISLWVNGTVPZWR.

The active site involves D12. N48 and N56 each carry an N-linked (GlcNAc...) asparagine glycan.

The protein belongs to the glycosyl hydrolase 3 family.

The enzyme catalyses Hydrolysis of terminal, non-reducing beta-D-glucosyl residues with release of beta-D-glucose.. It participates in glycan metabolism; cellulose degradation. The protein is Beta-glucosidase A-3 of Aspergillus wentii.